The sequence spans 130 residues: Splicing regulatory small protein (130 aa).

The segment covering 1–10 (MRTKPQRPRA) has biased composition (basic residues). 2 disordered regions span residues 1-29 (MRTKPQRPRATRSYLGQPCGSPRRTEETG) and 74-130 (GRAL…STRR). The tract at residues 16–22 (GQPCGSP) is mediates interaction with SRSF3. Residues 77 to 98 (LEPKADPHTCPYGRKESRGEKV) show a composition bias toward basic and acidic residues. Over residues 120-130 (SLKSGSPSTRR) the composition is skewed to polar residues.

Interacts with SRSF3; increases SRSF3 binding to specific exons.

It localises to the nucleus. Its function is as follows. Interacts with the splicing factor SRSF3 and increases its binding to specific exons within pre-mRNA, thereby regulating exon-inclusion during alternative splicing. Does not directly bind pre-mRNA and could regulate a wider range of splicing factors through a similar mechanism. The sequence is that of Splicing regulatory small protein from Homo sapiens (Human).